Here is a 599-residue protein sequence, read N- to C-terminus: Kelch-like protein 41a (599 aa).

The BTB domain maps to 32–102; it reads VDCILKVGDR…LYSADIDITD (71 aa). Positions 137–239 constitute a BACK domain; the sequence is CLAIFRMGLV…PEKYLKEKVE (103 aa). 5 Kelch repeats span residues 339 to 391, 393 to 440, 441 to 488, 489 to 535, and 537 to 591; these read LLYV…EFEN, LFAV…SQNG, LVYC…VHKG, KIVV…SVDG, and LYAV…SMRL.

The protein resides in the cytoplasm. Its subcellular location is the cytoskeleton. It is found in the sarcoplasmic reticulum membrane. The protein localises to the endoplasmic reticulum membrane. In terms of biological role, involved in skeletal muscle development and differentiation. This chain is Kelch-like protein 41a (klhl41a), found in Danio rerio (Zebrafish).